A 564-amino-acid chain; its full sequence is Serine/threonine-protein kinase DBF20 (564 aa).

Ser17 carries the phosphoserine modification. Residues 24 to 62 (LNIPKPTSPQAQYRPARKSENGRLTPGLPRSYKPCDSDD) are disordered. Positions 169 to 469 (FQILTQVGQG…FEQVRKMSYF (301 aa)) constitute a Protein kinase domain. Residues 175 to 183 (VGQGGYGQV) and Lys198 contribute to the ATP site. Residue Asp292 is the Proton acceptor of the active site. Ser366 bears the Phosphoserine mark. The region spanning 470–547 (AEINFETLRT…RHRDGKQGSS (78 aa)) is the AGC-kinase C-terminal domain. Thr536 is subject to Phosphothreonine.

The protein belongs to the protein kinase superfamily. Ser/Thr protein kinase family.

The catalysed reaction is L-seryl-[protein] + ATP = O-phospho-L-seryl-[protein] + ADP + H(+). It carries out the reaction L-threonyl-[protein] + ATP = O-phospho-L-threonyl-[protein] + ADP + H(+). Is probably a Ser/Thr-protein kinase that may function in initiation of DNA synthesis and also in late nuclear division. This Saccharomyces cerevisiae (strain ATCC 204508 / S288c) (Baker's yeast) protein is Serine/threonine-protein kinase DBF20 (DBF20).